Consider the following 291-residue polypeptide: Verruculogen synthase (291 aa).

Residue tyrosine 68 is part of the active site.

It belongs to the PhyH family. In terms of assembly, homodimer. The cofactor is Fe cation.

The catalysed reaction is fumitremorgin B + 2-oxoglutarate + AH2 + 2 O2 = verruculogen + succinate + A + CO2 + H2O. It participates in mycotoxin biosynthesis. Its function is as follows. Verruculogen synthase; part of the gene cluster that mediates the biosynthesis of fumitremorgins, indole alkaloids that carry not only intriguing chemical structures, but also interesting biological and pharmacological activities. The biosynthesis of fumitremorgin-type alkaloids begins by condensation of the two amino acids L-tryptophan and L-proline to brevianamide F, catalyzed by the non-ribosomal peptide synthetase ftmA. Brevianamide F is then prenylated by the prenyltransferase ftmPT1/ftmB in the presence of dimethylallyl diphosphate, resulting in the formation of tryprostatin B. The three cytochrome P450 monooxygenases, ftmP450-1/ftmC, ftmP450-2/ftmE and ftmP450-3/FtmG, are responsible for the conversion of tryprostatin B to 6-hydroxytryprostatin B, tryprostatin A to fumitremorgin C and fumitremorgin C to 12,13-dihydroxyfumitremorgin C, respectively. The putative methyltransferase ftmMT/ftmD is expected for the conversion of 6-hydroxytryprostatin B to tryprostatin A. FtmPT2/FtmH catalyzes the prenylation of 12,13-dihydroxyfumitre-morgin C in the presence of dimethylallyl diphosphate, resulting in the formation of fumitremorgin B. Fumitremorgin B is further converted to verruculogen by ftmOx1/ftmF via the insertion of an endoperoxide bond between the two prenyl moieties. In some fungal species, verruculogen is further converted to fumitremorgin A, but the enzymes involved in this step have not been identified yet. This Aspergillus fumigatus (strain ATCC MYA-4609 / CBS 101355 / FGSC A1100 / Af293) (Neosartorya fumigata) protein is Verruculogen synthase.